We begin with the raw amino-acid sequence, 356 residues long: Methionine import ATP-binding protein MetN 1 (356 aa).

The region spanning 2 to 241 (IELKNISVTF…PQQPLTKDFI (240 aa)) is the ABC transporter domain. 38–45 (GYSGAGKS) contributes to the ATP binding site.

Belongs to the ABC transporter superfamily. Methionine importer (TC 3.A.1.24) family. The complex is composed of two ATP-binding proteins (MetN), two transmembrane proteins (MetI) and a solute-binding protein (MetQ).

It is found in the cell membrane. It catalyses the reaction L-methionine(out) + ATP + H2O = L-methionine(in) + ADP + phosphate + H(+). The enzyme catalyses D-methionine(out) + ATP + H2O = D-methionine(in) + ADP + phosphate + H(+). Functionally, part of the ABC transporter complex MetNIQ involved in methionine import. Responsible for energy coupling to the transport system. This is Methionine import ATP-binding protein MetN 1 from Enterococcus faecalis (strain ATCC 700802 / V583).